Reading from the N-terminus, the 458-residue chain is N-acetylgalactosamine kinase (458 aa).

The alpha-D-galactose site is built by Arg-43, Glu-49, His-50, and Asp-52. The ATP site is built by Gly-143, Ser-145, and Ser-146. Asp-190 is an alpha-D-galactose binding site. Asp-190 acts as the Proton acceptor in catalysis. Residues Asn-233 and Lys-234 each contribute to the ATP site.

Belongs to the GHMP kinase family. GalK subfamily. Monomer.

The catalysed reaction is N-acetyl-alpha-D-galactosamine + ATP = N-acetyl-alpha-D-galactosamine 1-phosphate + ADP + H(+). Acts on GalNAc. Also acts as a galactokinase when galactose is present at high concentrations. The chain is N-acetylgalactosamine kinase (Galk2) from Mus musculus (Mouse).